The sequence spans 275 residues: Biotin synthase (275 aa).

The region spanning 1–217 is the Radical SAM core domain; sequence MLCAICNVSS…DTAKTLPQCR (217 aa). C13, C17, and C20 together coordinate [4Fe-4S] cluster. [2Fe-2S] cluster contacts are provided by C57, C92, C150, and R217.

This sequence belongs to the radical SAM superfamily. Biotin synthase family. As to quaternary structure, homodimer. [4Fe-4S] cluster is required as a cofactor. [2Fe-2S] cluster serves as cofactor.

It catalyses the reaction (4R,5S)-dethiobiotin + (sulfur carrier)-SH + 2 reduced [2Fe-2S]-[ferredoxin] + 2 S-adenosyl-L-methionine = (sulfur carrier)-H + biotin + 2 5'-deoxyadenosine + 2 L-methionine + 2 oxidized [2Fe-2S]-[ferredoxin]. It participates in cofactor biosynthesis; biotin biosynthesis; biotin from 7,8-diaminononanoate: step 2/2. Functionally, catalyzes the conversion of dethiobiotin (DTB) to biotin by the insertion of a sulfur atom into dethiobiotin via a radical-based mechanism. In Campylobacter fetus subsp. fetus (strain 82-40), this protein is Biotin synthase.